Here is a 395-residue protein sequence, read N- to C-terminus: Outer membrane protein assembly factor BamB (395 aa).

The signal sequence occupies residues 1–20; that stretch reads MKSWCKNLLAAGLSLAMLSA. Residue C21 is the site of N-palmitoyl cysteine attachment. C21 carries S-diacylglycerol cysteine lipidation.

It belongs to the BamB family. As to quaternary structure, part of the Bam complex.

Its subcellular location is the cell outer membrane. Its function is as follows. Part of the outer membrane protein assembly complex, which is involved in assembly and insertion of beta-barrel proteins into the outer membrane. In Shewanella oneidensis (strain ATCC 700550 / JCM 31522 / CIP 106686 / LMG 19005 / NCIMB 14063 / MR-1), this protein is Outer membrane protein assembly factor BamB.